The chain runs to 412 residues: Serine hydroxymethyltransferase (412 aa).

(6S)-5,6,7,8-tetrahydrofolate is bound by residues L117 and 121–123; that span reads GHL. At K226 the chain carries N6-(pyridoxal phosphate)lysine. 349-351 provides a ligand contact to (6S)-5,6,7,8-tetrahydrofolate; it reads SPF.

The protein belongs to the SHMT family. Homodimer. Pyridoxal 5'-phosphate serves as cofactor.

The protein localises to the cytoplasm. The catalysed reaction is (6R)-5,10-methylene-5,6,7,8-tetrahydrofolate + glycine + H2O = (6S)-5,6,7,8-tetrahydrofolate + L-serine. Its pathway is one-carbon metabolism; tetrahydrofolate interconversion. The protein operates within amino-acid biosynthesis; glycine biosynthesis; glycine from L-serine: step 1/1. Catalyzes the reversible interconversion of serine and glycine with tetrahydrofolate (THF) serving as the one-carbon carrier. This reaction serves as the major source of one-carbon groups required for the biosynthesis of purines, thymidylate, methionine, and other important biomolecules. Also exhibits THF-independent aldolase activity toward beta-hydroxyamino acids, producing glycine and aldehydes, via a retro-aldol mechanism. The polypeptide is Serine hydroxymethyltransferase (Geobacillus thermodenitrificans (strain NG80-2)).